The sequence spans 456 residues: Bifunctional protein GlmU (456 aa).

A pyrophosphorylase region spans residues 1-229; sequence MLNNAMSVVI…LSEVEGVNNR (229 aa). UDP-N-acetyl-alpha-D-glucosamine contacts are provided by residues 11–14, Lys-25, Gln-76, 81–82, 103–105, Gly-140, Glu-154, Asn-169, and Asn-227; these read LAAG, GT, and YGD. Residue Asp-105 coordinates Mg(2+). A Mg(2+)-binding site is contributed by Asn-227. The linker stretch occupies residues 230-250; it reads LQLSRLERVYQSEQAEKLLLA. The segment at 251-456 is N-acetyltransferase; sequence GVMLRDPARF…EGWRRPVKKK (206 aa). Residues Arg-333 and Lys-351 each coordinate UDP-N-acetyl-alpha-D-glucosamine. The Proton acceptor role is filled by His-363. Tyr-366 and Asn-377 together coordinate UDP-N-acetyl-alpha-D-glucosamine. Acetyl-CoA-binding positions include Ala-380, 386 to 387, Ser-405, Ala-423, and Arg-440; that span reads NY.

The protein in the N-terminal section; belongs to the N-acetylglucosamine-1-phosphate uridyltransferase family. In the C-terminal section; belongs to the transferase hexapeptide repeat family. As to quaternary structure, homotrimer. Requires Mg(2+) as cofactor.

Its subcellular location is the cytoplasm. The catalysed reaction is alpha-D-glucosamine 1-phosphate + acetyl-CoA = N-acetyl-alpha-D-glucosamine 1-phosphate + CoA + H(+). It catalyses the reaction N-acetyl-alpha-D-glucosamine 1-phosphate + UTP + H(+) = UDP-N-acetyl-alpha-D-glucosamine + diphosphate. It participates in nucleotide-sugar biosynthesis; UDP-N-acetyl-alpha-D-glucosamine biosynthesis; N-acetyl-alpha-D-glucosamine 1-phosphate from alpha-D-glucosamine 6-phosphate (route II): step 2/2. Its pathway is nucleotide-sugar biosynthesis; UDP-N-acetyl-alpha-D-glucosamine biosynthesis; UDP-N-acetyl-alpha-D-glucosamine from N-acetyl-alpha-D-glucosamine 1-phosphate: step 1/1. It functions in the pathway bacterial outer membrane biogenesis; LPS lipid A biosynthesis. Functionally, catalyzes the last two sequential reactions in the de novo biosynthetic pathway for UDP-N-acetylglucosamine (UDP-GlcNAc). The C-terminal domain catalyzes the transfer of acetyl group from acetyl coenzyme A to glucosamine-1-phosphate (GlcN-1-P) to produce N-acetylglucosamine-1-phosphate (GlcNAc-1-P), which is converted into UDP-GlcNAc by the transfer of uridine 5-monophosphate (from uridine 5-triphosphate), a reaction catalyzed by the N-terminal domain. In Escherichia coli O45:K1 (strain S88 / ExPEC), this protein is Bifunctional protein GlmU.